A 1795-amino-acid polypeptide reads, in one-letter code: MMVFQSFILGNLVSLCMKIINSVVVVGLYYGFLTTFSIGPSYLFLLRARVMDEGEEGTEKKVSATTGFIAGQLMMFISIYYAPLHLALGRPHTITVLALPYLLFHFFWNNHKHFFDYGSTTRNEMRNLRIQCVFLNNLIFQLFNHFILPSSMLARLVNIYMFRCNNKMLFVTSSFVGWLIGHILFMKWVGLVLVWIQQNNSIRSNVLIRSNKYKFLVSELRNSMARIFSILLFITCVYYLGRIPSPIFTKKLKGTSETGGTKQDQEVSTEEAPFPSLFSEEGEDLDKIDEMEEIRVNGKDKINKDDEFHVRTYYNYKTVSENVDGNKENSNLEFFKIKKKEDHFLWFEKPFVTLVFDYKRWNRPNRYIKNDKIENTVRNEMSQYFFYTCQSDGKERISFTYPPTLSTFFEMIKKKIPSFTREKTPSDPISTYWSLINEEKKENLKKEFLNRIEALDKEWSVENILEKTTRFCHNEAKKEYLPKIYDPFLHGISRGRIKKLPPFQIITQTYRKNNIGASWINKIHGLLLKINYHKFEQTIEKFNSKSLSIEKKLSFFSEPQQEEKIDSEEEIKIFKFLFDVVRTHSNDQTRIKNFIDFYEINKKVPRWSYKLISELEELEGENEENVPMEPGIRSRKAKRVVIFTDKEPHNEIYTNLKDNQNSDQKDEMALIRYSQQSDFRREIIKGSMRSQRRKSIIWEFFQAKVHSPLFFDRKDKLFFFSFDIWGLKKKILRNFMWKNKKKKIDKKEEEQSKIEEKRRIEIAETWDSFLFAQIIRGSLLVTQSILRKYIILPLLIIIKNSVRMLLFQFPEWSEDLKDWKREMHIKCTYNGVQLSETEFPKNWLTDGIQIKILFPFYLKPWHKSKFQASQKVRLKKTKDKGEKNDFCFLTVWGMETELPFGSAQKKPSFVEPISKELKKRIKKFKTKPFLVLRIFKKRATILLKVTKEMKNWTLKNFLFIKGKIKDLSKQNLIPLFGPSEIYELNETKKDSIISNQIIHQLSVQNKSMEWTNSSLSEKKKKNLIDRIKTIRNKIDEISKEKQNLTNSCTKLRYDSKIIESSKKIWQTFKRKNTRLIRKSIFFIKFCIEQLSIAIFLGIINIQRITTQLFFESTKIILDKYIYKNDEIGEKKNKKNTIYFISTIKNLISNKKKISYDLCSLSQAYVFYKLSQIKISNFSKLKAVLEYNICITSFFVKNQIKVFFQEQGIFQYELKNKTFLNSEVNQWKNWLRSHYQYNLPQIAWARLVTEKWKKKITQDSLVLNPSLTKEDSYEKKIVDNYKKQNFFEANSLVTPKHNLKKDSIYNIFCYKSIHCTEKNVDMSISIALDNCLVSSFLEKYNIRGIGEIQYRKYLDWRILNFWFTKKVNIEPWVDTKSKQKYINTKVQNYQRIDKITKTGLANQKRNFFDWMGMNEEILNHRITNFEFVFFPEFVLFSSTYKMKPWVIPIKLLLLNFNENINVNKKITRKKKGFIQSNEKKSRRFYNLNKDEKESTGQVEFESDKEQQRNSESALSNQEKNIEENYAESTIKKRKNKKQYKSNTEAELDLFLTRYSRFQLRWNCFFNQKILDNVKVYCLLVRLKNPNEIAISSIERGEMSLDILMIEKNFTFAKLMKKGILIIEPVRLSVQNDGQLIIYRTIGISLVHKNKNKDKISKRYKKKSYIDKKKIDKSITKYQNKTVNRKKNNYDFFVPENILSPKRRREFRILICFNFKKKTARDRNSRFDKNIQNLPTVLHKKKDLDKDKKNLINLKSFLWPNFRLEDLACMNRYWFNTTNGNHFSMIRIHMYTRFPIH.

The next 6 helical transmembrane spans lie at 19–39 (IINS…FSIG), 68–88 (FIAG…HLAL), 91–111 (PHTI…WNNH), 133–153 (VFLN…SSML), 176–196 (VGWL…LVWI), and 227–247 (IFSI…PSPI). The tract at residues 1490-1517 (EKESTGQVEFESDKEQQRNSESALSNQE) is disordered. Residues 1508 to 1517 (NSESALSNQE) show a composition bias toward polar residues.

Belongs to the TIC214 family. Part of the Tic complex.

It localises to the plastid. Its subcellular location is the chloroplast inner membrane. Involved in protein precursor import into chloroplasts. May be part of an intermediate translocation complex acting as a protein-conducting channel at the inner envelope. The protein is Protein TIC 214 of Crucihimalaya wallichii (Rock-cress).